The chain runs to 514 residues: MTDKLIIFDTTLRDGEQSPGASMTKEEKIRIAKNLERMKVDVIEAGFAASSNGDFDAIHTIAGLVKDSTICSLARANDKDIQRAADALKPANSFRIHTFIATSPLHMEKKLRMTPDQVFEQARLAVRFARKFTDNVEFSPEDGSRSDMDFLCRVLEAVIAEGATTINIADTVGYGVPELYGNLVKTLRERIPNSDKAIFSVHCHNDLGMAVANSLAGVKIGGARQVECTINGLGERAGNTSLEEIVMAVKTRKDYFGLDVGIDTSQIVPTSKLVSQITGFVVQPNKAVVGANAFAHASGIHQDGVLKARDTYEIMRAEDVGWTANKIVLGKLSGRNAFKQRLQELGVSLDSEAELNAAFMRFKDLADRKAEIFDEDIIAIVSEESALAQEQEHFKFVSLSQRSETGEQPQAKVVFAVEGKEVTGEARGNGPVDATFNAIEGEVGSGSELLLYSVNAITTGTQAQGEVTVRLSKSGRIVNGVGTDPDIVAASAKAYISALNKLHSKDDKVNPQRS.

The region spanning 5-268 is the Pyruvate carboxyltransferase domain; the sequence is LIIFDTTLRD…DVGIDTSQIV (264 aa). Mn(2+)-binding residues include aspartate 14, histidine 202, histidine 204, and asparagine 239. The segment at 395–514 is regulatory domain; it reads KFVSLSQRSE…KDDKVNPQRS (120 aa).

Belongs to the alpha-IPM synthase/homocitrate synthase family. LeuA type 1 subfamily. In terms of assembly, homodimer. The cofactor is Mn(2+).

The protein localises to the cytoplasm. The catalysed reaction is 3-methyl-2-oxobutanoate + acetyl-CoA + H2O = (2S)-2-isopropylmalate + CoA + H(+). Its pathway is amino-acid biosynthesis; L-leucine biosynthesis; L-leucine from 3-methyl-2-oxobutanoate: step 1/4. Functionally, catalyzes the condensation of the acetyl group of acetyl-CoA with 3-methyl-2-oxobutanoate (2-ketoisovalerate) to form 3-carboxy-3-hydroxy-4-methylpentanoate (2-isopropylmalate). The polypeptide is 2-isopropylmalate synthase (Burkholderia cenocepacia (strain ATCC BAA-245 / DSM 16553 / LMG 16656 / NCTC 13227 / J2315 / CF5610) (Burkholderia cepacia (strain J2315))).